A 270-amino-acid chain; its full sequence is Myelin protein zero-like protein 1 (270 aa).

An N-terminal signal peptide occupies residues 1 to 35 (MAEAVGAVALIAAPARRRWLWSVLAAMLGLLTARI). An Ig-like V-type domain is found at 36-151 (SALEVHTPKE…DIVVRPGHIR (116 aa)). The Extracellular segment spans residues 36–162 (SALEVHTPKE…HVVEIDNLLV (127 aa)). Asn-50 and Asn-130 each carry an N-linked (GlcNAc...) asparagine glycan. Cys-58 and Cys-135 are disulfide-bonded. The helical transmembrane segment at 163–183 (FLVWVVVGTVTAVVLGLTLLI) threads the bilayer. Topologically, residues 184–270 (SLVLVVLYRR…SVVYADIRKD (87 aa)) are cytoplasmic. Positions 201–257 (TGCSTSERLSPVKQAPRKCPSDTEGLVKSPPSAGSHQGPVIYAQLDHSGGHHSGKIN) are disordered. Phosphoserine is present on residues Ser-204, Ser-206, Ser-210, and Ser-221. Positions 240-245 (VIYAQL) match the ITIM motif 1 motif. Tyr-242 carries the post-translational modification Phosphotyrosine. Residue Ser-261 is modified to Phosphoserine. Residues 262–267 (VVYADI) carry the ITIM motif 2 motif. Phosphotyrosine is present on Tyr-264.

Belongs to the myelin P0 protein family. In terms of assembly, interacts with phosphorylated PTPN11/SHP-2. Post-translationally, phosphorylated on tyrosine residues upon stimulation with pervanadate and concanavalin-A (ConA). Phosphorylation at Tyr-242 and Tyr-264 is required for interaction with PTPN11/SHP-2. Dephosphorylated by PTPN11/SHP-2 (in vitro).

The protein localises to the membrane. In terms of biological role, cell surface receptor, which is involved in signal transduction processes. Recruits PTPN11/SHP-2 to the cell membrane and is a putative substrate of PTPN11/SHP-2. Is a major receptor for concanavalin-A (ConA) and is involved in cellular signaling induced by ConA, which probably includes Src family tyrosine-protein kinases. Isoform 2 seems to have a dominant negative role; it blocks tyrosine phosphorylation of MPZL1 induced by ConA. Isoform 1, but not isoform 2, may be involved in regulation of integrin-mediated cell motility. The polypeptide is Myelin protein zero-like protein 1 (Mpzl1) (Mus musculus (Mouse)).